A 451-amino-acid polypeptide reads, in one-letter code: Phosphoglucosamine mutase (451 aa).

Catalysis depends on S101, which acts as the Phosphoserine intermediate. 4 residues coordinate Mg(2+): S101, D240, D242, and D244. S101 is modified (phosphoserine).

The protein belongs to the phosphohexose mutase family. Requires Mg(2+) as cofactor. Post-translationally, activated by phosphorylation.

The catalysed reaction is alpha-D-glucosamine 1-phosphate = D-glucosamine 6-phosphate. In terms of biological role, catalyzes the conversion of glucosamine-6-phosphate to glucosamine-1-phosphate. The chain is Phosphoglucosamine mutase from Streptococcus pyogenes serotype M18 (strain MGAS8232).